The sequence spans 72 residues: Translation initiation factor IF-1 (72 aa).

An S1-like domain is found at 1–72 (MAKEDSIEMQ…TKGRIIFRAR (72 aa)).

The protein belongs to the IF-1 family. Component of the 30S ribosomal translation pre-initiation complex which assembles on the 30S ribosome in the order IF-2 and IF-3, IF-1 and N-formylmethionyl-tRNA(fMet); mRNA recruitment can occur at any time during PIC assembly.

Its subcellular location is the cytoplasm. Its function is as follows. One of the essential components for the initiation of protein synthesis. Stabilizes the binding of IF-2 and IF-3 on the 30S subunit to which N-formylmethionyl-tRNA(fMet) subsequently binds. Helps modulate mRNA selection, yielding the 30S pre-initiation complex (PIC). Upon addition of the 50S ribosomal subunit IF-1, IF-2 and IF-3 are released leaving the mature 70S translation initiation complex. This is Translation initiation factor IF-1 from Actinobacillus succinogenes (strain ATCC 55618 / DSM 22257 / CCUG 43843 / 130Z).